A 142-amino-acid chain; its full sequence is Hemoglobin subunit alpha (142 aa).

S1 carries the post-translational modification N-acetylserine. The Globin domain maps to 1 to 142; that stretch reads SLTDKDKATV…VSLALSERYR (142 aa). H59 provides a ligand contact to O2. A heme b-binding site is contributed by H88.

Belongs to the globin family. Hb1 is a heterotetramer of two alpha chains and two beta-1 chains. Hb2 is a heterotetramer of two alpha chains and two beta-2 chains. In terms of tissue distribution, red blood cells.

Functionally, involved in oxygen transport from gills to the various peripheral tissues. This is Hemoglobin subunit alpha (hba) from Pseudaphritis urvillii (Congolli).